A 328-amino-acid chain; its full sequence is tRNA uridine(34) hydroxylase (328 aa).

The 95-residue stretch at 130–224 folds into the Rhodanese domain; that stretch reads LDKDTVVLDT…YGKDPEVQGE (95 aa). Residue Cys-184 is the Cysteine persulfide intermediate of the active site.

Belongs to the TrhO family.

It carries out the reaction uridine(34) in tRNA + AH2 + O2 = 5-hydroxyuridine(34) in tRNA + A + H2O. Functionally, catalyzes oxygen-dependent 5-hydroxyuridine (ho5U) modification at position 34 in tRNAs. This Streptococcus pneumoniae (strain P1031) protein is tRNA uridine(34) hydroxylase.